We begin with the raw amino-acid sequence, 214 residues long: ATP phosphoribosyltransferase (214 aa).

It belongs to the ATP phosphoribosyltransferase family. Short subfamily. As to quaternary structure, heteromultimer composed of HisG and HisZ subunits.

The protein resides in the cytoplasm. It catalyses the reaction 1-(5-phospho-beta-D-ribosyl)-ATP + diphosphate = 5-phospho-alpha-D-ribose 1-diphosphate + ATP. It functions in the pathway amino-acid biosynthesis; L-histidine biosynthesis; L-histidine from 5-phospho-alpha-D-ribose 1-diphosphate: step 1/9. Its function is as follows. Catalyzes the condensation of ATP and 5-phosphoribose 1-diphosphate to form N'-(5'-phosphoribosyl)-ATP (PR-ATP). Has a crucial role in the pathway because the rate of histidine biosynthesis seems to be controlled primarily by regulation of HisG enzymatic activity. The polypeptide is ATP phosphoribosyltransferase (Lysinibacillus sphaericus (strain C3-41)).